The sequence spans 600 residues: Alanine--tRNA ligase (600 aa).

Zn(2+)-binding residues include H463, H467, C565, and H569.

This sequence belongs to the class-II aminoacyl-tRNA synthetase family. The cofactor is Zn(2+).

The protein localises to the cytoplasm. It catalyses the reaction tRNA(Ala) + L-alanine + ATP = L-alanyl-tRNA(Ala) + AMP + diphosphate. In terms of biological role, catalyzes the attachment of alanine to tRNA(Ala) in a two-step reaction: alanine is first activated by ATP to form Ala-AMP and then transferred to the acceptor end of tRNA(Ala). Also edits incorrectly charged Ser-tRNA(Ala) and Gly-tRNA(Ala) via its editing domain. The protein is Alanine--tRNA ligase (alaS) of Treponema denticola (strain ATCC 35405 / DSM 14222 / CIP 103919 / JCM 8153 / KCTC 15104).